The sequence spans 324 residues: Phospho-N-acetylmuramoyl-pentapeptide-transferase (324 aa).

The next 10 membrane-spanning stretches (helical) occupy residues 5-25 (IIVI…PLFI), 52-72 (PTMG…WVTA), 76-96 (VLSA…VLGF), 117-137 (FIGQ…SGFS), 147-167 (WSFD…VGGS), 176-196 (LDGL…VLAW), 203-223 (VAVF…FNAH), 227-247 (VFMG…VAVL), 250-270 (LELL…SVII), and 302-322 (IVVT…YIEV).

The protein belongs to the glycosyltransferase 4 family. MraY subfamily. It depends on Mg(2+) as a cofactor.

The protein localises to the cell membrane. It catalyses the reaction UDP-N-acetyl-alpha-D-muramoyl-L-alanyl-gamma-D-glutamyl-meso-2,6-diaminopimeloyl-D-alanyl-D-alanine + di-trans,octa-cis-undecaprenyl phosphate = di-trans,octa-cis-undecaprenyl diphospho-N-acetyl-alpha-D-muramoyl-L-alanyl-D-glutamyl-meso-2,6-diaminopimeloyl-D-alanyl-D-alanine + UMP. Its pathway is cell wall biogenesis; peptidoglycan biosynthesis. Catalyzes the initial step of the lipid cycle reactions in the biosynthesis of the cell wall peptidoglycan: transfers peptidoglycan precursor phospho-MurNAc-pentapeptide from UDP-MurNAc-pentapeptide onto the lipid carrier undecaprenyl phosphate, yielding undecaprenyl-pyrophosphoryl-MurNAc-pentapeptide, known as lipid I. The protein is Phospho-N-acetylmuramoyl-pentapeptide-transferase of Geobacillus thermodenitrificans (strain NG80-2).